A 165-amino-acid polypeptide reads, in one-letter code: Protein SprT (165 aa).

Positions 20 to 163 constitute a SprT-like domain; that stretch reads EKLAQANLKL…RCVHCGEQLV (144 aa). His-78 contributes to the Zn(2+) binding site. The active site involves Glu-79. Residue His-82 participates in Zn(2+) binding.

It belongs to the SprT family. It depends on Zn(2+) as a cofactor.

The protein localises to the cytoplasm. This is Protein SprT from Escherichia coli (strain K12 / MC4100 / BW2952).